We begin with the raw amino-acid sequence, 262 residues long: 5'-nucleotidase SurE (262 aa).

A divalent metal cation is bound by residues Asp11, Asp12, Ser43, and Asn101.

It belongs to the SurE nucleotidase family. A divalent metal cation serves as cofactor.

It is found in the cytoplasm. It carries out the reaction a ribonucleoside 5'-phosphate + H2O = a ribonucleoside + phosphate. Functionally, nucleotidase that shows phosphatase activity on nucleoside 5'-monophosphates. The chain is 5'-nucleotidase SurE from Prochlorococcus marinus (strain NATL1A).